We begin with the raw amino-acid sequence, 179 residues long: GTP-dependent dephospho-CoA kinase (179 aa).

GTP is bound by residues aspartate 43, valine 45, aspartate 62, glutamate 120, and aspartate 143.

This sequence belongs to the GTP-dependent DPCK family.

It carries out the reaction 3'-dephospho-CoA + GTP = GDP + CoA + H(+). It functions in the pathway cofactor biosynthesis; coenzyme A biosynthesis. Catalyzes the GTP-dependent phosphorylation of the 3'-hydroxyl group of dephosphocoenzyme A to form coenzyme A (CoA). The polypeptide is GTP-dependent dephospho-CoA kinase (Haloarcula marismortui (strain ATCC 43049 / DSM 3752 / JCM 8966 / VKM B-1809) (Halobacterium marismortui)).